Consider the following 210-residue polypeptide: Putative protein-lysine deacylase ABHD14B (210 aa).

A2 is modified (N-acetylalanine). The residue at position 91 (S91) is a Phosphoserine. Catalysis depends on charge relay system residues S111, D162, and H188.

This sequence belongs to the AB hydrolase superfamily. ABHD14 family. May interact with TAF1.

The protein resides in the cytoplasm. The protein localises to the nucleus. The enzyme catalyses L-lysyl-[protein] + acetyl-CoA = N(6)-acetyl-L-lysyl-[protein] + CoA + H(+). Functionally, acts as an atypical protein-lysine deacetylase in vitro. Catalyzes the deacetylation of lysine residues using CoA as substrate, generating acetyl-CoA and the free amine of protein-lysine residues. Additional experiments are however required to confirm the protein-lysine deacetylase activity in vivo. Has hydrolase activity towards various surrogate p-nitrophenyl (pNp) substrates, such as pNp-butyrate, pNp-acetate and pNp-octanoate in vitro, with a strong preference for pNp-acetate. May activate transcription. The protein is Putative protein-lysine deacylase ABHD14B of Pongo abelii (Sumatran orangutan).